Consider the following 426-residue polypeptide: D-tagatose-1,6-bisphosphate aldolase subunit KbaZ (426 aa).

It belongs to the GatZ/KbaZ family. KbaZ subfamily. In terms of assembly, forms a complex with KbaY.

It participates in carbohydrate metabolism; D-tagatose 6-phosphate degradation; D-glyceraldehyde 3-phosphate and glycerone phosphate from D-tagatose 6-phosphate: step 2/2. Its function is as follows. Component of the tagatose-1,6-bisphosphate aldolase KbaYZ that is required for full activity and stability of the Y subunit. Could have a chaperone-like function for the proper and stable folding of KbaY. When expressed alone, KbaZ does not show any aldolase activity. In Escherichia coli O139:H28 (strain E24377A / ETEC), this protein is D-tagatose-1,6-bisphosphate aldolase subunit KbaZ.